A 467-amino-acid polypeptide reads, in one-letter code: MVQLNQKFINSIAQEMPPHLSMDDFVHYCGLPLRLSIRVNTLKITSDALRAILEPRGWQFEPVPWCEDGFWVTVPDDCQPGNLTEHYQGLFYIQEASSMMPPCALFMDKEPRQLLLDVASAPGSKTTQLAALMHNQGLIIANEYSASRTKALHANLQRMGVANVAITQFDGRVFGAHLYETLDAIQLDAPCSGEGTVRKDPLSLKNWCPDEIEAIAELQRDLIDSAFQALKPGGVLVYSTCTLNRRENEDVCHFLKERYGDAVVFESLNDLFKGADKALTEEGFLHIWPQIYDSEGFFVARIRKTASVARNTDDPRFVSKFPFVAANRKELSALEEAMLALGVSLPEDAVIVTRDGEFWLMPAPLDGLLTKMRFQRIGIRLAETQKHGIKVRHEAVMALPCNQMLSIEPEAAKQYLMGRDIALDNAGKAQGEKILSLHGAPLGIAKHLGNKLKNSLPRDLCRDNVQN.

Residues alanine 119–lysine 125, glutamate 143, aspartate 170, and aspartate 188 contribute to the S-adenosyl-L-methionine site. Cysteine 241 (nucleophile) is an active-site residue.

It belongs to the class I-like SAM-binding methyltransferase superfamily. RsmB/NOP family.

The protein localises to the cytoplasm. The catalysed reaction is cytidine(1407) in 16S rRNA + S-adenosyl-L-methionine = 5-methylcytidine(1407) in 16S rRNA + S-adenosyl-L-homocysteine + H(+). Functionally, specifically methylates the cytosine at position 1407 (m5C1407) of 16S rRNA. This Shewanella amazonensis (strain ATCC BAA-1098 / SB2B) protein is Ribosomal RNA small subunit methyltransferase F.